Reading from the N-terminus, the 192-residue chain is Fe/S biogenesis protein NfuA (192 aa).

Cysteine 150 and cysteine 153 together coordinate [4Fe-4S] cluster.

Belongs to the NfuA family. As to quaternary structure, homodimer. [4Fe-4S] cluster is required as a cofactor.

Functionally, involved in iron-sulfur cluster biogenesis. Binds a 4Fe-4S cluster, can transfer this cluster to apoproteins, and thereby intervenes in the maturation of Fe/S proteins. Could also act as a scaffold/chaperone for damaged Fe/S proteins. This is Fe/S biogenesis protein NfuA from Buchnera aphidicola subsp. Acyrthosiphon pisum (strain APS) (Acyrthosiphon pisum symbiotic bacterium).